The following is a 342-amino-acid chain: GTPase Obg (342 aa).

Residues Met-1–Ile-159 form the Obg domain. The OBG-type G domain occupies Ala-160–Asp-327. Residues Gly-166–Ser-173, Phe-191–His-195, Asp-212–Gly-215, Ser-279–Asp-282, and Ser-308–Ala-310 each bind GTP. The Mg(2+) site is built by Ser-173 and Thr-193.

Belongs to the TRAFAC class OBG-HflX-like GTPase superfamily. OBG GTPase family. Monomer. Mg(2+) is required as a cofactor.

It localises to the cytoplasm. Functionally, an essential GTPase which binds GTP, GDP and possibly (p)ppGpp with moderate affinity, with high nucleotide exchange rates and a fairly low GTP hydrolysis rate. Plays a role in control of the cell cycle, stress response, ribosome biogenesis and in those bacteria that undergo differentiation, in morphogenesis control. This is GTPase Obg from Methylobacterium nodulans (strain LMG 21967 / CNCM I-2342 / ORS 2060).